Reading from the N-terminus, the 408-residue chain is Phosphoglycerate kinase (408 aa).

Residues 24 to 26, R39, 62 to 65, R121, and R161 each bind substrate; these read DLN and HLGR. Residues K211, G307, E338, and 364–367 each bind ATP; that span reads GGDS.

It belongs to the phosphoglycerate kinase family. In terms of assembly, monomer.

The protein resides in the cytoplasm. The catalysed reaction is (2R)-3-phosphoglycerate + ATP = (2R)-3-phospho-glyceroyl phosphate + ADP. The protein operates within carbohydrate degradation; glycolysis; pyruvate from D-glyceraldehyde 3-phosphate: step 2/5. This is Phosphoglycerate kinase from Paenarthrobacter aurescens (strain TC1).